A 128-amino-acid chain; its full sequence is L-ectoine synthase (128 aa).

The protein belongs to the ectoine synthase family.

The catalysed reaction is (2S)-4-acetamido-2-aminobutanoate = L-ectoine + H2O. The protein operates within amine and polyamine biosynthesis; ectoine biosynthesis; L-ectoine from L-aspartate 4-semialdehyde: step 3/3. In terms of biological role, catalyzes the circularization of gamma-N-acetyl-alpha,gamma-diaminobutyric acid (ADABA) to ectoine (1,4,5,6-tetrahydro-2-methyl-4-pyrimidine carboxylic acid), which is an excellent osmoprotectant. The protein is L-ectoine synthase of Oceanobacillus iheyensis (strain DSM 14371 / CIP 107618 / JCM 11309 / KCTC 3954 / HTE831).